A 257-amino-acid chain; its full sequence is Regulator of G-protein signaling 7-binding protein (257 aa).

The segment at 1–45 (MSSAPNGRKKRPSRSTRSSIFQISKPPLQSGDWERRGSGSESAHK) is disordered. Positions 32–45 (DWERRGSGSESAHK) are enriched in basic and acidic residues. Positions 242–247 (RRRKRR) match the Nuclear localization signal motif. 2 S-palmitoyl cysteine lipidation sites follow: Cys252 and Cys253.

Belongs to the RGS7BP/RGS9BP family. Interacts with 'R7' family proteins RGS6, RGS7, RGS9 and RGS11. Component of some R7-Gbeta5 complex composed of some R7 protein (RGS6, RGS7, RGS9 or RGS11), Gbeta5 (GNB5) and RGS7BP. In terms of processing, palmitoylated. Undergoes rapid palmitoylation turnover. De novo and turnover palmitoylation are both mediated by ZDHHC2. Palmitoylation regulates the cell membrane and nuclear shuttling and the regulation of GPCR signaling. Upon depalmitoylation, it is targeted from the plasma membrane into the nucleus. GPCR signaling inhibits depalmitoylation and promotes localization to the plasma membrane. Specifically expressed in the central nervous system including the retina but not in other non-neuronal tissues (at protein level).

It localises to the nucleus. Its subcellular location is the cytoplasm. It is found in the cell membrane. Regulator of G protein-coupled receptor (GPCR) signaling. Regulatory subunit of the R7-Gbeta5 complexes that acts by controlling the subcellular location of the R7-Gbeta5 complexes. When palmitoylated, it targets the R7-Gbeta5 complexes to the plasma membrane, leading to inhibit G protein alpha subunits. When it is unpalmitoylated, the R7-Gbeta5 complexes undergo a nuclear/cytoplasmic shuttling. May also act by controlling the proteolytic stability of R7 proteins, probably by protecting them from degradation. The protein is Regulator of G-protein signaling 7-binding protein (Rgs7bp) of Mus musculus (Mouse).